Consider the following 105-residue polypeptide: UPF0145 protein GK1405 (105 aa).

This sequence belongs to the UPF0145 family.

In Geobacillus kaustophilus (strain HTA426), this protein is UPF0145 protein GK1405.